A 61-amino-acid chain; its full sequence is Small ribosomal subunit protein uS14 (61 aa).

4 residues coordinate Zn(2+): cysteine 24, cysteine 27, cysteine 40, and cysteine 43.

Belongs to the universal ribosomal protein uS14 family. Zinc-binding uS14 subfamily. In terms of assembly, part of the 30S ribosomal subunit. Contacts proteins S3 and S10. The cofactor is Zn(2+).

In terms of biological role, binds 16S rRNA, required for the assembly of 30S particles and may also be responsible for determining the conformation of the 16S rRNA at the A site. The chain is Small ribosomal subunit protein uS14 from Streptococcus equi subsp. zooepidemicus (strain H70).